The chain runs to 206 residues: Large ribosomal subunit protein uL4 (206 aa).

It belongs to the universal ribosomal protein uL4 family. In terms of assembly, part of the 50S ribosomal subunit.

Functionally, one of the primary rRNA binding proteins, this protein initially binds near the 5'-end of the 23S rRNA. It is important during the early stages of 50S assembly. It makes multiple contacts with different domains of the 23S rRNA in the assembled 50S subunit and ribosome. Its function is as follows. Forms part of the polypeptide exit tunnel. This is Large ribosomal subunit protein uL4 from Rhodopseudomonas palustris (strain ATCC BAA-98 / CGA009).